The sequence spans 290 residues: Tubulin beta-4B chain (290 aa).

The short motif at 1–4 is the MREI motif element; sequence MREI. Position 11 (Gln11) interacts with GTP. A Phosphothreonine modification is found at Thr55. Lys58 bears the N6-acetyllysine mark. 6 residues coordinate GTP: Glu69, Ser138, Gly142, Thr143, Gly144, and Asn172. Residue Glu69 coordinates Mg(2+).

The protein belongs to the tubulin family. In terms of assembly, dimer of alpha and beta chains. A typical microtubule is a hollow water-filled tube with an outer diameter of 25 nm and an inner diameter of 15 nM. Alpha-beta heterodimers associate head-to-tail to form protofilaments running lengthwise along the microtubule wall with the beta-tubulin subunit facing the microtubule plus end conferring a structural polarity. Microtubules usually have 13 protofilaments but different protofilament numbers can be found in some organisms and specialized cells. Component of sperm flagellar doublet microtubules. It depends on Mg(2+) as a cofactor. In terms of processing, some glutamate residues at the C-terminus are polyglycylated, resulting in polyglycine chains on the gamma-carboxyl group. Glycylation is mainly limited to tubulin incorporated into axonemes (cilia and flagella) whereas glutamylation is prevalent in neuronal cells, centrioles, axonemes, and the mitotic spindle. Both modifications can coexist on the same protein on adjacent residues, and lowering polyglycylation levels increases polyglutamylation, and reciprocally. Cilia and flagella glycylation is required for their stability and maintenance. Flagella glycylation controls sperm motility. Some glutamate residues at the C-terminus are polyglutamylated, resulting in polyglutamate chains on the gamma-carboxyl group. Polyglutamylation plays a key role in microtubule severing by spastin (SPAST). SPAST preferentially recognizes and acts on microtubules decorated with short polyglutamate tails: severing activity by SPAST increases as the number of glutamates per tubulin rises from one to eight, but decreases beyond this glutamylation threshold. Glutamylation is also involved in cilia motility.

Its subcellular location is the cytoplasm. It localises to the cytoskeleton. The protein localises to the flagellum axoneme. Its function is as follows. Tubulin is the major constituent of microtubules, a cylinder consisting of laterally associated linear protofilaments composed of alpha- and beta-tubulin heterodimers. Microtubules grow by the addition of GTP-tubulin dimers to the microtubule end, where a stabilizing cap forms. Below the cap, tubulin dimers are in GDP-bound state, owing to GTPase activity of alpha-tubulin. The polypeptide is Tubulin beta-4B chain (TUBB4B) (Mesocricetus auratus (Golden hamster)).